A 96-amino-acid polypeptide reads, in one-letter code: Small ribosomal subunit protein uS19 (96 aa).

Positions 1–30 (MARSIKKGPFADKHLTKKVEDANKGNKKSV) are disordered. Basic and acidic residues predominate over residues 9 to 24 (PFADKHLTKKVEDANK).

It belongs to the universal ribosomal protein uS19 family.

Functionally, protein S19 forms a complex with S13 that binds strongly to the 16S ribosomal RNA. The sequence is that of Small ribosomal subunit protein uS19 from Anaeromyxobacter sp. (strain Fw109-5).